Consider the following 296-residue polypeptide: Glycine--tRNA ligase alpha subunit (296 aa).

This sequence belongs to the class-II aminoacyl-tRNA synthetase family. In terms of assembly, tetramer of two alpha and two beta subunits.

The protein localises to the cytoplasm. It carries out the reaction tRNA(Gly) + glycine + ATP = glycyl-tRNA(Gly) + AMP + diphosphate. This Maricaulis maris (strain MCS10) (Caulobacter maris) protein is Glycine--tRNA ligase alpha subunit.